Here is a 364-residue protein sequence, read N- to C-terminus: Chorismate synthase (364 aa).

2 residues coordinate NADP(+): R48 and R54. FMN is bound by residues 130–132 (RSS), 242–243 (NA), G287, 302–306 (KPTSS), and R328.

Belongs to the chorismate synthase family. In terms of assembly, homotetramer. Requires FMNH2 as cofactor.

The enzyme catalyses 5-O-(1-carboxyvinyl)-3-phosphoshikimate = chorismate + phosphate. Its pathway is metabolic intermediate biosynthesis; chorismate biosynthesis; chorismate from D-erythrose 4-phosphate and phosphoenolpyruvate: step 7/7. In terms of biological role, catalyzes the anti-1,4-elimination of the C-3 phosphate and the C-6 proR hydrogen from 5-enolpyruvylshikimate-3-phosphate (EPSP) to yield chorismate, which is the branch point compound that serves as the starting substrate for the three terminal pathways of aromatic amino acid biosynthesis. This reaction introduces a second double bond into the aromatic ring system. This chain is Chorismate synthase, found in Allorhizobium ampelinum (strain ATCC BAA-846 / DSM 112012 / S4) (Agrobacterium vitis (strain S4)).